The primary structure comprises 119 residues: Nascent polypeptide-associated complex protein (119 aa).

The NAC-A/B domain occupies 5–73; sequence RMNSREMRRL…FRETPKKQEG (69 aa).

Belongs to the NAC-alpha family. In terms of assembly, homodimer. Interacts with the ribosome. Binds ribosomal RNA.

In terms of biological role, contacts the emerging nascent chain on the ribosome. The polypeptide is Nascent polypeptide-associated complex protein (Thermoplasma volcanium (strain ATCC 51530 / DSM 4299 / JCM 9571 / NBRC 15438 / GSS1)).